Reading from the N-terminus, the 198-residue chain is MKETPIMILSGQDIQSRLGKDIVIDPFDPSRLSPNSYNLTLHDELLVYEEVVLDAASPNRYRRLPIPEEGLTLQPGTLYLGRTTEHTETHGLVPIIQGRSSLGRLGLFLNPGGSLGHAGYRGTWTLELHCVQPVRIYPHIQICQITYWEVSGDSPEEASEKYQNSNDIQPSLMHRELGYDDRDTQLELGFDEAIRSTP.

DCTP-binding positions include 99 to 104 (RSSLGR), 125 to 127 (TLE), and Gln-144. Glu-127 acts as the Proton donor/acceptor in catalysis.

Belongs to the dCTP deaminase family. In terms of assembly, homotrimer.

It catalyses the reaction dCTP + H2O + H(+) = dUTP + NH4(+). It participates in pyrimidine metabolism; dUMP biosynthesis; dUMP from dCTP (dUTP route): step 1/2. In terms of biological role, catalyzes the deamination of dCTP to dUTP. This chain is dCTP deaminase, found in Rhodopirellula baltica (strain DSM 10527 / NCIMB 13988 / SH1).